Here is a 367-residue protein sequence, read N- to C-terminus: Serine/threonine-protein kinase Sgk2 (367 aa).

Positions 1 to 26 are disordered; it reads MNSSPAGTPSPQPSRANGNINLGPSA. Phosphoserine is present on serine 10. Positions 35 to 292 constitute a Protein kinase domain; that stretch reads FDFLKVIGKG…FLEIKNHVFF (258 aa). Residues 41–49 and lysine 64 each bind ATP; that span reads IGKGNYGKV. The Nuclear localization signal signature appears at 68-78; that stretch reads KKSILKKKEQS. The Proton acceptor role is filled by aspartate 159. Threonine 193 is subject to Phosphothreonine; by PDPK1. Residues 293–367 form the AGC-kinase C-terminal domain; sequence SPINWDDLYH…APEDDDILDC (75 aa). Phosphoserine occurs at positions 334 and 356. Tyrosine 357 is modified (phosphotyrosine).

It belongs to the protein kinase superfamily. AGC Ser/Thr protein kinase family. In terms of processing, activated by phosphorylation on Ser-356 by an unknown kinase (may be mTORC2 but not confirmed), transforming it into a substrate for PDPK1 which then phosphorylates it on Thr-193. In terms of tissue distribution, highly expressed in liver, kidney and pancreas, and at lower levels in brain.

The protein localises to the cytoplasm. Its subcellular location is the nucleus. The enzyme catalyses L-seryl-[protein] + ATP = O-phospho-L-seryl-[protein] + ADP + H(+). It carries out the reaction L-threonyl-[protein] + ATP = O-phospho-L-threonyl-[protein] + ADP + H(+). Its activity is regulated as follows. Two specific sites, one in the kinase domain (Thr-193) and the other in the C-terminal regulatory region (Ser-356), need to be phosphorylated for its full activation. Serine/threonine-protein kinase which is involved in the regulation of a wide variety of ion channels, membrane transporters, cell growth, survival and proliferation. Up-regulates Na(+) channels: SCNN1A/ENAC, K(+) channels: KCNA3/Kv1.3, KCNE1 and KCNQ1, amino acid transporter: SLC6A19, glutamate transporter: SLC1A6/EAAT4, glutamate receptors: GRIA1/GLUR1 and GRIK2/GLUR6, Na(+)/H(+) exchanger: SLC9A3/NHE3, and the Na(+)/K(+) ATPase. The sequence is that of Serine/threonine-protein kinase Sgk2 (SGK2) from Homo sapiens (Human).